Here is a 299-residue protein sequence, read N- to C-terminus: ATP phosphoribosyltransferase (299 aa).

This sequence belongs to the ATP phosphoribosyltransferase family. Long subfamily. As to quaternary structure, equilibrium between an active dimeric form, an inactive hexameric form and higher aggregates. Interconversion between the various forms is largely reversible and is influenced by the natural substrates and inhibitors of the enzyme. Requires Mg(2+) as cofactor.

It localises to the cytoplasm. The enzyme catalyses 1-(5-phospho-beta-D-ribosyl)-ATP + diphosphate = 5-phospho-alpha-D-ribose 1-diphosphate + ATP. The protein operates within amino-acid biosynthesis; L-histidine biosynthesis; L-histidine from 5-phospho-alpha-D-ribose 1-diphosphate: step 1/9. Its activity is regulated as follows. Feedback inhibited by histidine. Catalyzes the condensation of ATP and 5-phosphoribose 1-diphosphate to form N'-(5'-phosphoribosyl)-ATP (PR-ATP). Has a crucial role in the pathway because the rate of histidine biosynthesis seems to be controlled primarily by regulation of HisG enzymatic activity. This chain is ATP phosphoribosyltransferase, found in Serratia proteamaculans (strain 568).